We begin with the raw amino-acid sequence, 434 residues long: Methylenetetrahydrofolate--tRNA-(uracil-5-)-methyltransferase TrmFO (434 aa).

10–15 lines the FAD pocket; sequence GAGLAG.

The protein belongs to the MnmG family. TrmFO subfamily. The cofactor is FAD.

It is found in the cytoplasm. The catalysed reaction is uridine(54) in tRNA + (6R)-5,10-methylene-5,6,7,8-tetrahydrofolate + NADH + H(+) = 5-methyluridine(54) in tRNA + (6S)-5,6,7,8-tetrahydrofolate + NAD(+). It catalyses the reaction uridine(54) in tRNA + (6R)-5,10-methylene-5,6,7,8-tetrahydrofolate + NADPH + H(+) = 5-methyluridine(54) in tRNA + (6S)-5,6,7,8-tetrahydrofolate + NADP(+). Functionally, catalyzes the folate-dependent formation of 5-methyl-uridine at position 54 (M-5-U54) in all tRNAs. The sequence is that of Methylenetetrahydrofolate--tRNA-(uracil-5-)-methyltransferase TrmFO from Bacillus cytotoxicus (strain DSM 22905 / CIP 110041 / 391-98 / NVH 391-98).